The chain runs to 130 residues: Histone H2A type 2-B (130 aa).

The segment at 1–22 (MSGRGKQGGKARAKAKSRSSRA) is disordered. N-acetylserine is present on S2. Phosphoserine; by RPS6KA5 is present on S2. R4 bears the Citrulline; alternate mark. A Symmetric dimethylarginine; by PRMT5; alternate modification is found at R4. K6 is subject to N6-(2-hydroxyisobutyryl)lysine. Over residues 7–19 (QGGKARAKAKSRS) the composition is skewed to basic residues. K10 is modified (N6-(2-hydroxyisobutyryl)lysine; alternate). Residues K10 and K14 each carry the N6-(beta-hydroxybutyryl)lysine; alternate modification. At K10 the chain carries N6-lactoyllysine; alternate. K10 is modified (N6-succinyllysine; alternate). K14 participates in a covalent cross-link: Glycyl lysine isopeptide (Lys-Gly) (interchain with G-Cter in ubiquitin); alternate. A Glycyl lysine isopeptide (Lys-Gly) (interchain with G-Cter in ubiquitin) cross-link involves residue K16. K37 is subject to N6-(2-hydroxyisobutyryl)lysine; alternate. K37 bears the N6-(beta-hydroxybutyryl)lysine; alternate mark. The residue at position 37 (K37) is an N6-crotonyllysine; alternate. An N6-(2-hydroxyisobutyryl)lysine mark is found at K75 and K76. K96 carries the post-translational modification N6-(2-hydroxyisobutyryl)lysine; alternate. An N6-(beta-hydroxybutyryl)lysine; alternate modification is found at K96. Residue K96 is modified to N6-succinyllysine; alternate. K96 carries the N6-glutaryllysine; alternate modification. Q105 carries the N5-methylglutamine modification. K119 is subject to N6-(2-hydroxyisobutyryl)lysine; alternate. K119 is subject to N6-(beta-hydroxybutyryl)lysine; alternate. N6-crotonyllysine; alternate is present on residues K119 and K120. Residues K119 and K120 each carry the N6-glutaryllysine; alternate modification. A Glycyl lysine isopeptide (Lys-Gly) (interchain with G-Cter in ubiquitin); alternate cross-link involves residue K120. The residue at position 121 (T121) is a Phosphothreonine; by DCAF1.

The protein belongs to the histone H2A family. As to quaternary structure, the nucleosome is a histone octamer containing two molecules each of H2A, H2B, H3 and H4 assembled in one H3-H4 heterotetramer and two H2A-H2B heterodimers. The octamer wraps approximately 147 bp of DNA. Post-translationally, deiminated on Arg-4 in granulocytes upon calcium entry. In terms of processing, monoubiquitination of Lys-120 (H2AK119Ub) by RING1, TRIM37 and RNF2/RING2 complex gives a specific tag for epigenetic transcriptional repression and participates in X chromosome inactivation of female mammals. It is involved in the initiation of both imprinted and random X inactivation. Ubiquitinated H2A is enriched in inactive X chromosome chromatin. Ubiquitination of H2A functions downstream of methylation of 'Lys-27' of histone H3 (H3K27me). H2AK119Ub by RNF2/RING2 can also be induced by ultraviolet and may be involved in DNA repair. Monoubiquitination of Lys-120 (H2AK119Ub) by TRIM37 may promote transformation of cells in a number of breast cancers. Following DNA double-strand breaks (DSBs), it is ubiquitinated through 'Lys-63' linkage of ubiquitin moieties by the E2 ligase UBE2N and the E3 ligases RNF8 and RNF168, leading to the recruitment of repair proteins to sites of DNA damage. Ubiquitination at Lys-14 and Lys-16 (H2AK13Ub and H2AK15Ub, respectively) in response to DNA damage is initiated by RNF168 that mediates monoubiquitination at these 2 sites, and 'Lys-63'-linked ubiquitin are then conjugated to monoubiquitin; RNF8 is able to extend 'Lys-63'-linked ubiquitin chains in vitro. Deubiquitinated by USP51 at Lys-14 and Lys-16 (H2AK13Ub and H2AK15Ub, respectively) after damaged DNA is repaired. H2AK119Ub and ionizing radiation-induced 'Lys-63'-linked ubiquitination (H2AK13Ub and H2AK15Ub) are distinct events. Phosphorylation on Ser-2 (H2AS1ph) is enhanced during mitosis. Phosphorylation on Ser-2 by RPS6KA5/MSK1 directly represses transcription. Acetylation of H3 inhibits Ser-2 phosphorylation by RPS6KA5/MSK1. Phosphorylation at Thr-121 (H2AT120ph) by DCAF1 is present in the regulatory region of many tumor suppresor genes and down-regulates their transcription. Post-translationally, symmetric dimethylation on Arg-4 by the PRDM1/PRMT5 complex may play a crucial role in the germ-cell lineage. In terms of processing, glutamine methylation at Gln-105 (H2AQ104me) by FBL is specifically dedicated to polymerase I. It is present at 35S ribosomal DNA locus and impairs binding of the FACT complex. Crotonylation (Kcr) is specifically present in male germ cells and marks testis-specific genes in post-meiotic cells, including X-linked genes that escape sex chromosome inactivation in haploid cells. Crotonylation marks active promoters and enhancers and confers resistance to transcriptional repressors. It is also associated with post-meiotically activated genes on autosomes. Post-translationally, lactylated in macrophages by EP300/P300 by using lactoyl-CoA directly derived from endogenous or exogenous lactate, leading to stimulates gene transcription.

It is found in the nucleus. Its subcellular location is the chromosome. Functionally, core component of nucleosome. Nucleosomes wrap and compact DNA into chromatin, limiting DNA accessibility to the cellular machineries which require DNA as a template. Histones thereby play a central role in transcription regulation, DNA repair, DNA replication and chromosomal stability. DNA accessibility is regulated via a complex set of post-translational modifications of histones, also called histone code, and nucleosome remodeling. The protein is Histone H2A type 2-B of Homo sapiens (Human).